Consider the following 736-residue polypeptide: Subtilisin-like protease SBT4.6 (736 aa).

Positions 1 to 24 (MATAVSYCLLSCIFALLVVSFASA) are cleaved as a signal peptide. Residues 25-111 (GKDDQDKQVY…VFPSKNLNLQ (87 aa)) constitute a propeptide, activation peptide. In terms of domain architecture, Inhibitor I9 spans 33–110 (VYIVYMGALP…SVFPSKNLNL (78 aa)). In terms of domain architecture, Peptidase S8 spans 115–589 (SWNFMGLKEG…AGHVDPIAAI (475 aa)). The active-site Charge relay system is Asp-143. A glycan (N-linked (GlcNAc...) asparagine) is linked at Asn-174. Catalysis depends on His-204, which acts as the Charge relay system. N-linked (GlcNAc...) asparagine glycosylation is present at Asn-227. The region spanning 362–442 (KYPLVYGKSA…PVSVLSEDDY (81 aa)) is the PA domain. Asn-450 carries N-linked (GlcNAc...) asparagine glycosylation. Ser-527 acts as the Charge relay system in catalysis. 4 N-linked (GlcNAc...) asparagine glycosylation sites follow: Asn-564, Asn-598, Asn-610, and Asn-668.

The protein belongs to the peptidase S8 family. Post-translationally, the C-terminal propeptide is autocleaved.

The protein localises to the secreted. The sequence is that of Subtilisin-like protease SBT4.6 from Arabidopsis thaliana (Mouse-ear cress).